The following is a 492-amino-acid chain: Probable malate:quinone oxidoreductase 1 (492 aa).

This sequence belongs to the MQO family. It depends on FAD as a cofactor.

It carries out the reaction (S)-malate + a quinone = a quinol + oxaloacetate. Its pathway is carbohydrate metabolism; tricarboxylic acid cycle; oxaloacetate from (S)-malate (quinone route): step 1/1. This Staphylococcus aureus (strain MRSA252) protein is Probable malate:quinone oxidoreductase 1.